The following is a 41-amino-acid chain: uncharacterized protein (41 aa).

This is an uncharacterized protein from Archaeoglobus fulgidus (strain ATCC 49558 / DSM 4304 / JCM 9628 / NBRC 100126 / VC-16).